A 337-amino-acid chain; its full sequence is Biotin synthase (337 aa).

Residues 58–283 (EDVEVEGIVS…RTVLRYAGGR (226 aa)) enclose the Radical SAM core domain. Cys73, Cys77, and Cys80 together coordinate [4Fe-4S] cluster. The [2Fe-2S] cluster site is built by Cys116, Cys149, Cys208, and Arg278.

It belongs to the radical SAM superfamily. Biotin synthase family. As to quaternary structure, homodimer. [4Fe-4S] cluster is required as a cofactor. [2Fe-2S] cluster serves as cofactor.

The enzyme catalyses (4R,5S)-dethiobiotin + (sulfur carrier)-SH + 2 reduced [2Fe-2S]-[ferredoxin] + 2 S-adenosyl-L-methionine = (sulfur carrier)-H + biotin + 2 5'-deoxyadenosine + 2 L-methionine + 2 oxidized [2Fe-2S]-[ferredoxin]. The protein operates within cofactor biosynthesis; biotin biosynthesis; biotin from 7,8-diaminononanoate: step 2/2. Its function is as follows. Catalyzes the conversion of dethiobiotin (DTB) to biotin by the insertion of a sulfur atom into dethiobiotin via a radical-based mechanism. In Pseudarthrobacter chlorophenolicus (strain ATCC 700700 / DSM 12829 / CIP 107037 / JCM 12360 / KCTC 9906 / NCIMB 13794 / A6) (Arthrobacter chlorophenolicus), this protein is Biotin synthase.